Here is a 623-residue protein sequence, read N- to C-terminus: Protein FAM234B (623 aa).

The segment at 1–82 is disordered; the sequence is MATVLSRALK…TSERAPEGYP (82 aa). A helical transmembrane segment spans residues 104–124; that stretch reads AVFLLTVVISMILVLVCAFLI.

Belongs to the FAM234 family.

The protein localises to the membrane. The protein resides in the golgi outpost. It localises to the cytoplasm. It is found in the cytoskeleton. Its subcellular location is the microtubule organizing center. In Gallus gallus (Chicken), this protein is Protein FAM234B (FAM234B).